Reading from the N-terminus, the 1308-residue chain is Spermatogenesis-associated protein 31F1B (1308 aa).

Residues 7 to 27 traverse the membrane as a helical segment; the sequence is FLWDTECPLYVYFCFFIIVLI. Disordered stretches follow at residues 464–488, 627–648, 844–863, 902–927, 1005–1026, 1084–1190, and 1204–1254; these read SPPIPLPEAAPPPSSTSPNESLDEP, SQPGKPEAYGSGDTFLPTAGKG, HGAQGHGRTEKVPPERQPLL, PTATDLESESVQEPLGSPRESTLLQG, FSTESQSPGKSKSGYVPTVAGK, GACP…AGLK, and MKSK…PKAQ. Residues 465-478 are compositionally biased toward pro residues; it reads PPIPLPEAAPPPSS. Acidic residues predominate over residues 1107–1117; sequence METDSEQDMED.

The protein belongs to the SPATA31 family.

It is found in the membrane. The chain is Spermatogenesis-associated protein 31F1B from Mus musculus (Mouse).